Here is a 457-residue protein sequence, read N- to C-terminus: NADH-quinone oxidoreductase subunit N (457 aa).

14 consecutive transmembrane segments (helical) span residues 2–22, 25–45, 60–80, 92–112, 114–134, 149–169, 188–208, 222–242, 253–273, 283–303, 310–330, 353–373, 382–402, and 431–451; these read NAIILISVLGILSMMSEFIGL, LIYPIILISLIGILGYNACTF, NYSVAFGSLLITITLFWFILF, GDHYALILFSTVGGLVLVSFS, MSMLFLGVEILSIPLYILAGS, FILGSFATGIMLLGIALIYGA, FFIGITLLSIAFAFKVSAVPF, FITAFMSTFVKVAAFGAFYLM, YLSHTLIGLSALTIVVGNIAA, LAFSGVSQAGYMLMVFPILTI, FVYLAGYAIANLIAIYIVQVV, AFVLSLSLISLAGIPPAAGFF, VIHAGNIYLVLIAILGSLISV, and VILAIMSALVVLIGLFPDILL.

Belongs to the complex I subunit 2 family. In terms of assembly, NDH-1 is composed of 14 different subunits. Subunits NuoA, H, J, K, L, M, N constitute the membrane sector of the complex.

Its subcellular location is the cell inner membrane. The catalysed reaction is a quinone + NADH + 5 H(+)(in) = a quinol + NAD(+) + 4 H(+)(out). In terms of biological role, NDH-1 shuttles electrons from NADH, via FMN and iron-sulfur (Fe-S) centers, to quinones in the respiratory chain. The immediate electron acceptor for the enzyme in this species is believed to be a menaquinone. Couples the redox reaction to proton translocation (for every two electrons transferred, four hydrogen ions are translocated across the cytoplasmic membrane), and thus conserves the redox energy in a proton gradient. The sequence is that of NADH-quinone oxidoreductase subunit N from Cytophaga hutchinsonii (strain ATCC 33406 / DSM 1761 / CIP 103989 / NBRC 15051 / NCIMB 9469 / D465).